The chain runs to 37 residues: Photosystem I reaction center subunit VIII (37 aa).

Residues 9 to 29 form a helical membrane-spanning segment; that stretch reads SIFVPLVGLVFPAIAMASLFL.

Belongs to the PsaI family.

It localises to the plastid. It is found in the chloroplast thylakoid membrane. Its function is as follows. May help in the organization of the PsaL subunit. The polypeptide is Photosystem I reaction center subunit VIII (Cucumis sativus (Cucumber)).